The primary structure comprises 279 residues: Zinc finger CCCH domain-containing protein 42 (279 aa).

The interval 11–77 is disordered; it reads SDHRSSSTPM…KAAVEPQEYP (67 aa). Positions 16-39 are enriched in low complexity; sequence SSTPMATTTSSSASDPAAISPTPS. C3H1-type zinc fingers lie at residues 79-107, 120-148, and 186-214; these read RPGV…HPAK, RPGE…HPPD, and RPGT…HPNS.

The sequence is that of Zinc finger CCCH domain-containing protein 42 from Oryza sativa subsp. japonica (Rice).